Reading from the N-terminus, the 235-residue chain is Futalosine hydrolase (235 aa).

It belongs to the PNP/UDP phosphorylase family. Futalosine hydrolase subfamily.

The catalysed reaction is futalosine + H2O = dehypoxanthine futalosine + hypoxanthine. The protein operates within quinol/quinone metabolism; menaquinone biosynthesis. In terms of biological role, catalyzes the hydrolysis of futalosine (FL) to dehypoxanthine futalosine (DHFL) and hypoxanthine, a step in the biosynthesis of menaquinone (MK, vitamin K2). Does not accept aminodeoxyfutalosine (AFL) as a substrate. This chain is Futalosine hydrolase, found in Streptomyces coelicolor (strain ATCC BAA-471 / A3(2) / M145).